Reading from the N-terminus, the 187-residue chain is Accessory gene regulator protein B (187 aa).

Transmembrane regions (helical) follow at residues 49–69, 82–102, 106–126, 144–164, and 166–186; these read ISIFLSVFLFTLVTHLSYMLI, ILCYIQSILTFVFVPYFLINI, FTYLLALSIIGLISVVIYAPA, LSIIMYLLVLILSLIIHPFYA, and FMLLGILVESITLLPIFFPKE.

The protein belongs to the AgrB family.

It localises to the cell membrane. Essential for the production of a quorum sensing system signal molecule, the autoinducing peptide (AIP). This quorum sensing system is responsible for the regulation of the expression of virulence factor genes. Involved in the proteolytic processing of AgrD, the precursor of AIP. This chain is Accessory gene regulator protein B, found in Staphylococcus aureus (strain Mu50 / ATCC 700699).